Reading from the N-terminus, the 413-residue chain is Serine/threonine transporter SstT (413 aa).

The next 9 helical transmembrane spans lie at glycine 14–serine 34, leucine 44–valine 64, isoleucine 82–phenylalanine 102, alanine 141–leucine 161, glycine 178–valine 198, leucine 217–phenylalanine 237, isoleucine 290–leucine 310, leucine 330–isoleucine 350, and leucine 356–valine 376.

Belongs to the dicarboxylate/amino acid:cation symporter (DAACS) (TC 2.A.23) family.

Its subcellular location is the cell inner membrane. It carries out the reaction L-serine(in) + Na(+)(in) = L-serine(out) + Na(+)(out). The catalysed reaction is L-threonine(in) + Na(+)(in) = L-threonine(out) + Na(+)(out). In terms of biological role, involved in the import of serine and threonine into the cell, with the concomitant import of sodium (symport system). In Edwardsiella ictaluri (strain 93-146), this protein is Serine/threonine transporter SstT.